The sequence spans 379 residues: Serpin B5 (379 aa).

N-linked (GlcNAc...) asparagine glycans are attached at residues N133, N176, and N361.

This sequence belongs to the serpin family. Ov-serpin subfamily.

Its subcellular location is the secreted. The protein resides in the extracellular space. Functionally, may not exhibit serine protease inhibitory activity. The protein is Serpin B5 (serpinb5) of Xenopus tropicalis (Western clawed frog).